We begin with the raw amino-acid sequence, 30 residues long: Alpha-defensin PhD-4 (30 aa).

Cystine bridges form between Cys2–Cys30, Cys4–Cys19, and Cys9–Cys29.

The protein resides in the secreted. Its function is as follows. In low salt conditions, has antibacterial activity against the Gram-negative bacterium E.coli ML35p (MIC=2.4 uM), the Gram-positive bacteria L.monocytogenes EGD (MIC=2.2 uM) and methicillin-resistant S.aureus ATCC 33591 (MIC=3.5 uM), and the fungus C.albicans 820 (MIC=3.9 uM). At high physiological salt concentrations the antimicrobial activity decreases significantly: E.coli ML35p (MIC=7.1 uM), L.monocytogenes EGD (MIC=1.8 uM), S.aureus ATCC 33591 (MIC=&gt;50 uM), and C.albicans 820 (MIC=&gt;50 uM). The sequence is that of Alpha-defensin PhD-4 from Papio hamadryas (Hamadryas baboon).